The chain runs to 188 residues: Grand meiotic recombination cluster protein 2 (188 aa).

Composition is skewed to polar residues over residues 1–13 (MSDTTEVPRQSSE) and 21–31 (ERTNSLKSPDV). The segment at 1 to 31 (MSDTTEVPRQSSENDQDNNLERTNSLKSPDV) is disordered.

Functionally, probable transcriptional activator involved in meiotic prophase and synaptonemal complex (SC) assembly. The protein is Grand meiotic recombination cluster protein 2 (GMC2) of Saccharomyces cerevisiae (strain ATCC 204508 / S288c) (Baker's yeast).